Reading from the N-terminus, the 96-residue chain is YcgL domain-containing protein Csal_1462 (96 aa).

One can recognise a YcgL domain in the interval 4–88; that stretch reads RLCEIFKSPR…ARESYLLDLY (85 aa).

The polypeptide is YcgL domain-containing protein Csal_1462 (Chromohalobacter salexigens (strain ATCC BAA-138 / DSM 3043 / CIP 106854 / NCIMB 13768 / 1H11)).